Here is a 146-residue protein sequence, read N- to C-terminus: CysO-cysteine peptidase (146 aa).

An MPN domain is found at 11-134; it reads LVIRADLVNA…LRSYRIVDGA (124 aa). The Zn(2+) site is built by His-88, His-90, and Asp-101. The short motif at 88–101 is the JAMM motif element; the sequence is HSHTATEAYPSRTD.

This sequence belongs to the peptidase M67A family. Zn(2+) is required as a cofactor.

It catalyses the reaction [CysO sulfur-carrier protein]-Gly-NH-CH2-C(O)-S-L-Cys + H2O = [CysO sulfur-carrier protein]-C-terminal Gly-Gly + L-cysteine + H(+). It participates in amino-acid biosynthesis; L-cysteine biosynthesis. Functionally, protease that hydrolyzes the covalent CysO-cysteine adduct synthesized by CysM to release L-cysteine and regenerate CysO. This chain is CysO-cysteine peptidase (mec), found in Mycobacterium bovis (strain ATCC BAA-935 / AF2122/97).